Reading from the N-terminus, the 788-residue chain is Endonuclease MutS2 (788 aa).

Position 332 to 339 (332 to 339) interacts with ATP; that stretch reads GPNTGGKT. The Smr domain occupies 713 to 788; it reads VDLRGMDAEE…GTGVTVVEIK (76 aa).

Belongs to the DNA mismatch repair MutS family. MutS2 subfamily. As to quaternary structure, homodimer. Binds to stalled ribosomes, contacting rRNA.

Its function is as follows. Endonuclease that is involved in the suppression of homologous recombination and thus may have a key role in the control of bacterial genetic diversity. Functionally, acts as a ribosome collision sensor, splitting the ribosome into its 2 subunits. Detects stalled/collided 70S ribosomes which it binds and splits by an ATP-hydrolysis driven conformational change. Acts upstream of the ribosome quality control system (RQC), a ribosome-associated complex that mediates the extraction of incompletely synthesized nascent chains from stalled ribosomes and their subsequent degradation. Probably generates substrates for RQC. This is Endonuclease MutS2 from Clostridium botulinum (strain 657 / Type Ba4).